Here is a 377-residue protein sequence, read N- to C-terminus: NADP-dependent oxidoreductase lnbE (377 aa).

Residues 170 to 173, 257 to 263, and 293 to 295 contribute to the NADP(+) site; these read GGNG, LTNPRVS, and SPV.

Belongs to the NADP-dependent oxidoreductase L4BD family.

It functions in the pathway secondary metabolite biosynthesis. Its function is as follows. NADP-dependent oxidoreductase; part of the lnb gene cluster that mediates the biosynthesis of diastereomeric piperazines. Lna and lnb clusters encode sets of enzymes that produce overlapping sets of previously undescribed metabolites such as piperazinomycin-like metabolites or morpholine. The lna and lnb biosynthetic pathways appear to be part of a signaling network that controls the formation of sclerotia, a resilient overwintering structure. One primary function of the non-canonical nonribosomal peptide synthetases lnaA and lnbA consists in the reduction of L-tyrosine. The presence in the clusters of tailoring enzymes such as the oxidoreductases lnaB, lnbB, lnaE or lnbE, as well as of the cytochrome P450 monooxygenases lnaC, lnaD, or lnbC, might explain formation of various diastereomeric piperazines. The sequence is that of NADP-dependent oxidoreductase lnbE from Aspergillus flavus (strain ATCC 200026 / FGSC A1120 / IAM 13836 / NRRL 3357 / JCM 12722 / SRRC 167).